The chain runs to 195 residues: Transcriptional regulator LdrP (195 aa).

Positions 110–182 (GELRARIARY…YRRVYLLDLA (73 aa)) constitute an HTH crp-type domain. The H-T-H motif DNA-binding region spans 142 to 161 (HEEIADATASIRESVSKVLA).

In terms of assembly, homodimer.

Its function is as follows. Activates transcription. Positively regulates PcrtB promoter upstream of the crtB operon in a cAMP-independent manner. Regulated genes include genes encoding DNA photolyase, phytoene synthase and cytochrome P450 monooxygenase, which are involved in carotenoid biosynthesis. Positively regulates the light-inducible gene cluster in the megaplasmid in a cAMP-independent manner. This is Transcriptional regulator LdrP from Thermus thermophilus (strain ATCC 27634 / DSM 579 / HB8).